We begin with the raw amino-acid sequence, 504 residues long: UDP-N-acetylmuramoylalanine--D-glutamate ligase (504 aa).

An ATP-binding site is contributed by G129–T135.

This sequence belongs to the MurCDEF family.

It localises to the cytoplasm. The enzyme catalyses UDP-N-acetyl-alpha-D-muramoyl-L-alanine + D-glutamate + ATP = UDP-N-acetyl-alpha-D-muramoyl-L-alanyl-D-glutamate + ADP + phosphate + H(+). It participates in cell wall biogenesis; peptidoglycan biosynthesis. Functionally, cell wall formation. Catalyzes the addition of glutamate to the nucleotide precursor UDP-N-acetylmuramoyl-L-alanine (UMA). This is UDP-N-acetylmuramoylalanine--D-glutamate ligase from Cupriavidus metallidurans (strain ATCC 43123 / DSM 2839 / NBRC 102507 / CH34) (Ralstonia metallidurans).